A 755-amino-acid chain; its full sequence is Dolichyl-phosphate-mannose--protein mannosyltransferase 4 (755 aa).

The tract at residues 1–23 is disordered; it reads MSQTLKKRGGNSSGRKSPTTSNI. An N-linked (GlcNAc...) asparagine glycan is attached at asparagine 11. A compositionally biased stretch (polar residues) spans 13–23; the sequence is SGRKSPTTSNI. The next 6 membrane-spanning stretches (helical) occupy residues 92-112, 147-167, 185-205, 212-232, 237-257, and 278-298; these read FFDL…WLIG, IVPI…ACLF, ILLD…YSKF, SFSS…SCVI, VGVF…WILL, and ALII…FAIL. MIR domains follow at residues 325-389, 396-454, and 466-523; these read SKPV…IVPT, GTKV…LRLH, and KKEI…FDLI. Asparagine 445 carries N-linked (GlcNAc...) asparagine glycosylation. The next 3 membrane-spanning stretches (helical) occupy residues 595–615, 640–660, and 670–690; these read IFFI…SIYI, LYNT…PFFL, and YLPA…FICS. N-linked (GlcNAc...) asparagine glycosylation is present at asparagine 691. Residues 706 to 726 form a helical membrane-spanning segment; sequence YKIIAVVAACSTAIIWFFFYF.

Belongs to the glycosyltransferase 39 family. Forms a functional homodimer.

The protein resides in the endoplasmic reticulum membrane. The enzyme catalyses a di-trans,poly-cis-dolichyl beta-D-mannosyl phosphate + L-seryl-[protein] = 3-O-(alpha-D-mannosyl)-L-seryl-[protein] + a di-trans,poly-cis-dolichyl phosphate + H(+). It catalyses the reaction a di-trans,poly-cis-dolichyl beta-D-mannosyl phosphate + L-threonyl-[protein] = 3-O-(alpha-D-mannosyl)-L-threonyl-[protein] + a di-trans,poly-cis-dolichyl phosphate + H(+). It participates in protein modification; protein glycosylation. Functionally, protein mannosyltransferase (PMT) involved in hyphal growth and drug sensitivity. Transfers mannose from Dol-P-mannose to Ser or Thr residues on proteins. PMT1, PMT2 and PMT4 account for most of the protein-O-glycosylation activity, while PMT5 and PMT6 may specifically modulate a much narrower spectrum of target proteins. Accounts for the O-glycosylation of AXL2, responsible for bud site selection, as well as of the SEC20 t-SNARE component. O-glycosylation of SEC20 is essential for its stability. Required for biofilm formation. The polypeptide is Dolichyl-phosphate-mannose--protein mannosyltransferase 4 (Candida albicans (strain SC5314 / ATCC MYA-2876) (Yeast)).